Here is a 341-residue protein sequence, read N- to C-terminus: NADH-quinone oxidoreductase subunit H 1 (341 aa).

9 helical membrane-spanning segments follow: residues 7–27, 46–66, 80–100, 111–131, 157–177, 183–203, 244–264, 273–293, and 305–325; these read IILT…ISLL, PNVV…KYIF, FFLA…VIPF, VAIL…IMGG, LGLI…SHIV, AFGL…LFFI, YIAI…GWLS, VFWM…VKAI, and IGWK…AFLA.

The protein belongs to the complex I subunit 1 family. NDH-1 is composed of 14 different subunits. Subunits NuoA, H, J, K, L, M, N constitute the membrane sector of the complex.

The protein localises to the cell inner membrane. The catalysed reaction is a quinone + NADH + 5 H(+)(in) = a quinol + NAD(+) + 4 H(+)(out). NDH-1 shuttles electrons from NADH, via FMN and iron-sulfur (Fe-S) centers, to quinones in the respiratory chain. The immediate electron acceptor for the enzyme in this species is believed to be ubiquinone. Couples the redox reaction to proton translocation (for every two electrons transferred, four hydrogen ions are translocated across the cytoplasmic membrane), and thus conserves the redox energy in a proton gradient. This subunit may bind ubiquinone. The sequence is that of NADH-quinone oxidoreductase subunit H 1 from Cereibacter sphaeroides (strain ATCC 17029 / ATH 2.4.9) (Rhodobacter sphaeroides).